A 99-amino-acid chain; its full sequence is Large ribosomal subunit protein bL27 (99 aa).

The tract at residues Met1–Leu21 is disordered.

It belongs to the bacterial ribosomal protein bL27 family.

The polypeptide is Large ribosomal subunit protein bL27 (Thermomicrobium roseum (strain ATCC 27502 / DSM 5159 / P-2)).